The primary structure comprises 92 residues: RNA-binding protein Hfq (92 aa).

The Sm domain maps to 9-68 (DPFLNALRRERVPVSIYLVNGIKLQGQVESFDQFVILLKNTVSQMVYKHAISTVVPARPF). Positions 68–92 (FNVSSHHNTPNQAAGYNASHDDSAE) are disordered. The span at 69-81 (NVSSHHNTPNQAA) shows a compositional bias: polar residues.

It belongs to the Hfq family. Homohexamer.

Functionally, RNA chaperone that binds small regulatory RNA (sRNAs) and mRNAs to facilitate mRNA translational regulation in response to envelope stress, environmental stress and changes in metabolite concentrations. Also binds with high specificity to tRNAs. The protein is RNA-binding protein Hfq of Shewanella loihica (strain ATCC BAA-1088 / PV-4).